The following is a 181-amino-acid chain: UPF0398 protein LMHCC_0668 (181 aa).

This sequence belongs to the UPF0398 family.

In Listeria monocytogenes serotype 4a (strain HCC23), this protein is UPF0398 protein LMHCC_0668.